The following is a 185-amino-acid chain: Ribosome-recycling factor (185 aa).

The protein belongs to the RRF family.

The protein resides in the cytoplasm. Responsible for the release of ribosomes from messenger RNA at the termination of protein biosynthesis. May increase the efficiency of translation by recycling ribosomes from one round of translation to another. The polypeptide is Ribosome-recycling factor (Neisseria gonorrhoeae (strain ATCC 700825 / FA 1090)).